Consider the following 581-residue polypeptide: Proteasome-associated ATPase (581 aa).

Positions 1 to 28 (MTSSDLTQRKGLTMSDSTPDTPRSTPED) are disordered. Over residues 14–24 (MSDSTPDTPRS) the composition is skewed to polar residues. A coiled-coil region spans residues 27–66 (EDAARRLAVLSAQNERLAQVLGEARGKIVELQQQIEEFAK). ATP is bound at residue 248-253 (GCGKTL). The disordered stretch occupies residues 561–581 (GSGRSAAGRTIETATSTGQYL). Residues 572–581 (ETATSTGQYL) show a composition bias toward polar residues. The interval 580–581 (YL) is docks into pockets in the proteasome alpha-ring.

Belongs to the AAA ATPase family. Homohexamer. Assembles into a hexameric ring structure that caps the 20S proteasome core. Strongly interacts with the prokaryotic ubiquitin-like protein Pup through a hydrophobic interface; the interacting region of ARC lies in its N-terminal coiled-coil domain. There is one Pup binding site per ARC hexamer ring. Upon ATP-binding, the C-terminus of ARC interacts with the alpha-rings of the proteasome core, possibly by binding to the intersubunit pockets.

It participates in protein degradation; proteasomal Pup-dependent pathway. Functionally, ATPase which is responsible for recognizing, binding, unfolding and translocation of pupylated proteins into the bacterial 20S proteasome core particle. May be essential for opening the gate of the 20S proteasome via an interaction with its C-terminus, thereby allowing substrate entry and access to the site of proteolysis. Thus, the C-termini of the proteasomal ATPase may function like a 'key in a lock' to induce gate opening and therefore regulate proteolysis. This chain is Proteasome-associated ATPase, found in Sanguibacter keddieii (strain ATCC 51767 / DSM 10542 / NCFB 3025 / ST-74).